The sequence spans 63 residues: uncharacterized protein (63 aa).

This is an uncharacterized protein from Thermoproteus tenax virus 1 (strain KRA1) (TTV1).